A 375-amino-acid chain; its full sequence is Histidine biosynthesis bifunctional protein HisB (375 aa).

The interval 1–168 is histidinol-phosphatase; that stretch reads MTPIVFIDRD…GIAHTLADAP (168 aa). Residue Asp-8 is the Nucleophile of the active site. Mg(2+) contacts are provided by Asp-8, Asp-10, and Asp-128. The Proton donor role is filled by Asp-10. An imidazoleglycerol-phosphate dehydratase region spans residues 169–375; sequence RRAVVQRHTK…HVLPSTKGAL (207 aa).

In the N-terminal section; belongs to the histidinol-phosphatase family. It in the C-terminal section; belongs to the imidazoleglycerol-phosphate dehydratase family. Requires Mg(2+) as cofactor.

Its subcellular location is the cytoplasm. It carries out the reaction D-erythro-1-(imidazol-4-yl)glycerol 3-phosphate = 3-(imidazol-4-yl)-2-oxopropyl phosphate + H2O. The enzyme catalyses L-histidinol phosphate + H2O = L-histidinol + phosphate. The protein operates within amino-acid biosynthesis; L-histidine biosynthesis; L-histidine from 5-phospho-alpha-D-ribose 1-diphosphate: step 6/9. Its pathway is amino-acid biosynthesis; L-histidine biosynthesis; L-histidine from 5-phospho-alpha-D-ribose 1-diphosphate: step 8/9. This chain is Histidine biosynthesis bifunctional protein HisB, found in Xylella fastidiosa (strain 9a5c).